A 180-amino-acid chain; its full sequence is ATP synthase subunit delta (180 aa).

The protein belongs to the ATPase delta chain family. F-type ATPases have 2 components, F(1) - the catalytic core - and F(0) - the membrane proton channel. F(1) has five subunits: alpha(3), beta(3), gamma(1), delta(1), epsilon(1). F(0) has three main subunits: a(1), b(2) and c(10-14). The alpha and beta chains form an alternating ring which encloses part of the gamma chain. F(1) is attached to F(0) by a central stalk formed by the gamma and epsilon chains, while a peripheral stalk is formed by the delta and b chains.

It is found in the cell membrane. Functionally, f(1)F(0) ATP synthase produces ATP from ADP in the presence of a proton or sodium gradient. F-type ATPases consist of two structural domains, F(1) containing the extramembraneous catalytic core and F(0) containing the membrane proton channel, linked together by a central stalk and a peripheral stalk. During catalysis, ATP synthesis in the catalytic domain of F(1) is coupled via a rotary mechanism of the central stalk subunits to proton translocation. Its function is as follows. This protein is part of the stalk that links CF(0) to CF(1). It either transmits conformational changes from CF(0) to CF(1) or is implicated in proton conduction. The chain is ATP synthase subunit delta from Leuconostoc mesenteroides subsp. mesenteroides (strain ATCC 8293 / DSM 20343 / BCRC 11652 / CCM 1803 / JCM 6124 / NCDO 523 / NBRC 100496 / NCIMB 8023 / NCTC 12954 / NRRL B-1118 / 37Y).